The chain runs to 307 residues: Probable GTP 3',8-cyclase (307 aa).

In terms of domain architecture, Radical SAM core spans 5 to 231; it reads RFGRPVTNLR…MHRRKKYFIP (227 aa). R14 serves as a coordination point for GTP. 3 residues coordinate [4Fe-4S] cluster: C21, C25, and C28. GTP is bound at residue K62. G66 is a binding site for S-adenosyl-L-methionine. T91 serves as a coordination point for GTP. An S-adenosyl-L-methionine-binding site is contributed by S115. K151 contacts GTP. Position 190 (M190) interacts with S-adenosyl-L-methionine. [4Fe-4S] cluster contacts are provided by C251 and C254. 256-258 contacts GTP; that stretch reads RLR. C268 contacts [4Fe-4S] cluster.

This sequence belongs to the radical SAM superfamily. MoaA family. Requires [4Fe-4S] cluster as cofactor.

The enzyme catalyses GTP + AH2 + S-adenosyl-L-methionine = (8S)-3',8-cyclo-7,8-dihydroguanosine 5'-triphosphate + 5'-deoxyadenosine + L-methionine + A + H(+). It functions in the pathway cofactor biosynthesis; molybdopterin biosynthesis. Catalyzes the cyclization of GTP to (8S)-3',8-cyclo-7,8-dihydroguanosine 5'-triphosphate. The sequence is that of Probable GTP 3',8-cyclase from Thermococcus kodakarensis (strain ATCC BAA-918 / JCM 12380 / KOD1) (Pyrococcus kodakaraensis (strain KOD1)).